The sequence spans 341 residues: Phenylalanine--tRNA ligase alpha subunit (341 aa).

Glutamate 254 lines the Mg(2+) pocket.

This sequence belongs to the class-II aminoacyl-tRNA synthetase family. Phe-tRNA synthetase alpha subunit type 1 subfamily. In terms of assembly, tetramer of two alpha and two beta subunits. The cofactor is Mg(2+).

The protein resides in the cytoplasm. It catalyses the reaction tRNA(Phe) + L-phenylalanine + ATP = L-phenylalanyl-tRNA(Phe) + AMP + diphosphate + H(+). This chain is Phenylalanine--tRNA ligase alpha subunit, found in Chlorobium phaeovibrioides (strain DSM 265 / 1930) (Prosthecochloris vibrioformis (strain DSM 265)).